The chain runs to 371 residues: MRKTLFSGVALAAVIAFGGSAWADVLVGIGIPVTGPNAVYGAQIQKGAEAAIKEVNDAGGINGEKIAITIGDDVSDPKQGISVANKFAADGVKFVIGHFNSGVTIPASQVYAENGILEISPGATNPQYTEQGLWNTFRTCGRDDQQGTVAGQYIFDHFKDAKIAVVHDKTPYGQGLADETKKKLNELGTKETLYEGVNVGEKDFSALIAKLKQAGVNVVYWGGLHPEAGLIIRQMADQGLKAQFISGDGIVSNELASIAGPAVEGTLNTFGPDPRNNPDNAELVKKFRDAGFEPEAYTLYSYAAVQSLAQAAKAAGSNDPQEVAKAMKEKGPFKTVLGDLSYDEKGDPKLPGYVMYKWEKGADGKYNYIQQ.

Residues 1-23 (MRKTLFSGVALAAVIAFGGSAWA) form the signal peptide.

The protein belongs to the leucine-binding protein family.

Its function is as follows. Component of an amino-acid transport system. The protein is Leu/Ile/Val-binding protein homolog 1 of Brucella melitensis biotype 1 (strain ATCC 23456 / CCUG 17765 / NCTC 10094 / 16M).